We begin with the raw amino-acid sequence, 102 residues long: MEIEILGQEDNPLLHRTDVQFKIVHDDATPSRLSVRDSLAAKLDKDSEEVVVHELDTKFGMRKTRGRAKVYDSPAQAAEVEHDHMLERNKIGADDADAEEAE.

The tract at residues 70 to 102 is disordered; that stretch reads VYDSPAQAAEVEHDHMLERNKIGADDADAEEAE. Positions 79–93 are enriched in basic and acidic residues; sequence EVEHDHMLERNKIGA.

It belongs to the eukaryotic ribosomal protein eS24 family.

This chain is Small ribosomal subunit protein eS24, found in Halobacterium salinarum (strain ATCC 29341 / DSM 671 / R1).